We begin with the raw amino-acid sequence, 228 residues long: Thermonuclease (228 aa).

The N-terminal stretch at 1 to 23 (MTEYLLSAGICMAIVSILLIGMA) is a signal peptide. A propeptide spanning residues 24 to 60 (ISNVSKGQYAKRFFFFATSCLVLTLVVVSSLSSSANA) is cleaved from the precursor. Residue D100 participates in Ca(2+) binding. R114 is a catalytic residue. Ca(2+) is bound by residues D119 and T120. Catalysis depends on residues E122 and R166.

Belongs to the thermonuclease family. Ca(2+) is required as a cofactor.

It is found in the secreted. It catalyses the reaction Endonucleolytic cleavage to nucleoside 3'-phosphates and 3'-phosphooligonucleotide end-products.. Enzyme that catalyzes the hydrolysis of both DNA and RNA at the 5' position of the phosphodiester bond. The polypeptide is Thermonuclease (nuc) (Staphylococcus aureus (strain MSSA476)).